A 146-amino-acid polypeptide reads, in one-letter code: MIREAQRSELPAILELWLESTTWGHPFIKANYWRDCIPLVRDAYLANAQNWVWEEDGKLLGFVSIMEGRFLAAMFVAPKAVRRGIGKALMQYVQQRHPHLMLEVYQKNQPAINFYQAQGFHIVDCAWQDETQLPTWIMSWPVVQTL.

An N-acetyltransferase domain is found at 1–143 (MIREAQRSEL…PTWIMSWPVV (143 aa)).

Belongs to the acetyltransferase family.

The enzyme catalyses L-lysyl-[protein] + acetyl-CoA = N(6)-acetyl-L-lysyl-[protein] + CoA + H(+). Its function is as follows. N-epsilon-lysine acetyltransferase that catalyzes acetylation of a large number of proteins. Overexpression inhibits motility. The chain is Peptidyl-lysine N-acetyltransferase YiaC (yiaC) from Escherichia coli (strain K12).